The sequence spans 491 residues: bZIP transcription factor hapX (491 aa).

The interval 19 to 73 (AKPAISPSPGPGTPGSITSKEWVIPPRPKPGRKPATDTPPTKRKAQNRAAQRAFR) is disordered. The bZIP domain maps to 55 to 95 (DTPPTKRKAQNRAAQRAFRERRAARVNELEEQIKKIEDEHE). The basic motif stretch occupies residues 60–79 (KRKAQNRAAQRAFRERRAAR). Residues 83–90 (LEEQIKKI) form a leucine-zipper region. The span at 149–161 (SSLSDREAVRSDK) shows a compositional bias: basic and acidic residues. Disordered stretches follow at residues 149-196 (SSLS…REEV), 224-245 (EQSR…KPDP), and 397-416 (VSRG…SAAP). Residues 397–413 (VSRGRSGSNNNTSSGSS) show a composition bias toward low complexity.

This sequence belongs to the bZIP family. YAP subfamily.

It is found in the nucleus. Transcription factor required for repression of genes during iron starvation. Represses iron-dependent and mitochondrial-localized activities including respiration, TCA cycle, amino acid metabolism, iron-sulfur-cluster and heme biosynthesis. Iron starvation causes a massive remodeling of the amino acid pool and hapX is essential for the coordination of the production of siderophores and their precursor ornithine. This chain is bZIP transcription factor hapX, found in Aspergillus fumigatus (strain ATCC MYA-4609 / CBS 101355 / FGSC A1100 / Af293) (Neosartorya fumigata).